A 679-amino-acid polypeptide reads, in one-letter code: Glycine--tRNA ligase beta subunit (679 aa).

The protein belongs to the class-II aminoacyl-tRNA synthetase family. As to quaternary structure, tetramer of two alpha and two beta subunits.

The protein resides in the cytoplasm. It catalyses the reaction tRNA(Gly) + glycine + ATP = glycyl-tRNA(Gly) + AMP + diphosphate. This is Glycine--tRNA ligase beta subunit from Streptococcus pyogenes serotype M12 (strain MGAS9429).